The sequence spans 179 residues: Large ribosomal subunit protein uL5 (179 aa).

Position 3 is an N6-acetyllysine (lysine 3).

Belongs to the universal ribosomal protein uL5 family. As to quaternary structure, part of the 50S ribosomal subunit; part of the 5S rRNA/L5/L18/L25 subcomplex. Contacts the 5S rRNA and the P site tRNA. Forms a bridge to the 30S subunit in the 70S ribosome.

In terms of biological role, this is one of the proteins that bind and probably mediate the attachment of the 5S RNA into the large ribosomal subunit, where it forms part of the central protuberance. In the 70S ribosome it contacts protein S13 of the 30S subunit (bridge B1b), connecting the 2 subunits; this bridge is implicated in subunit movement. Contacts the P site tRNA; the 5S rRNA and some of its associated proteins might help stabilize positioning of ribosome-bound tRNAs. The protein is Large ribosomal subunit protein uL5 of Escherichia coli O45:K1 (strain S88 / ExPEC).